Reading from the N-terminus, the 586-residue chain is Ezrin (586 aa).

In terms of domain architecture, FERM spans 2–295 (PKPINVRVTT…GNHELYMRRR (294 aa)). At Lys-60 the chain carries N6-acetyllysine. A [IL]-x-C-x-x-[DE] motif motif is present at residues 115-120 (IYCPPE). A Phosphotyrosine; by PDGFR modification is found at Tyr-146. Positions 244 to 586 (EIRNISFNDK…KQRIDEFEAM (343 aa)) are interaction with SCYL3. The stretch at 302 to 462 (VQQMKAQARE…QDDLVKTKEE (161 aa)) forms a coiled coil. The interval 306-338 (KAQAREEKHQKQLERQQLETEKKRRETVEREKE) is disordered. Positions 308–338 (QAREEKHQKQLERQQLETEKKRRETVEREKE) are enriched in basic and acidic residues. Residue Ser-366 is modified to Phosphoserine. Tyr-478 carries the post-translational modification Phosphotyrosine. Ser-535 carries the phosphoserine modification. Thr-567 carries the post-translational modification Phosphothreonine; by ROCK2 and PKC/PRKCI.

As to quaternary structure, interacts with PODXL and NHERF2. Found in a complex with EZR, PODXL and NHERF2. Interacts with PALS1. Interacts with MCC, PLEKHG6, SCYL3/PACE1, NHERF1 and TMEM8B. Interacts (when phosphorylated) with FES/FPS. Interacts with dimeric S100P, the interaction may be activating through unmasking of F-actin binding sites. Identified in complexes that contain VIM, EZR, AHNAK, BFSP1, BFSP2, ANK2, PLEC, PRX and spectrin. Detected in a complex composed of at least EZR, AHNAK, PPL and PRX. Interacts with PDPN (via cytoplasmic domain); activates RHOA and promotes epithelial-mesenchymal transition. Interacts with SPN/CD43 cytoplasmic tail, CD44 and ICAM2. Interacts with SLC9A3; interaction targets SLC9A3 to the apical membrane. Interacts with SLC9A1; regulates interactions of SLC9A1 with cytoskeletal and promotes stress fiber formation. Interacts with CLIC5; may work together in a complex which also includes RDX and MYO6 to stabilize linkages between the plasma membrane and subjacent actin cytoskeleton at the base of stereocilia. Post-translationally, phosphorylated by tyrosine-protein kinases. Phosphorylation by ROCK2 suppresses the head-to-tail association of the N-terminal and C-terminal halves resulting in an opened conformation which is capable of actin and membrane-binding. In terms of processing, S-nitrosylation is induced by interferon-gamma and oxidatively-modified low-densitity lipoprotein (LDL(ox)) possibly implicating the iNOS-S100A8/9 transnitrosylase complex. In terms of tissue distribution, glomerular epithelium cell (podocyte). Expressed in cerebrum, cerebellum and hippocampus (at protein level). Expressed in the small intestine, lung, kidney and ovaries.

It localises to the apical cell membrane. The protein localises to the cell projection. Its subcellular location is the microvillus membrane. The protein resides in the ruffle membrane. It is found in the cytoplasm. It localises to the cell cortex. The protein localises to the cytoskeleton. Its subcellular location is the microvillus. A head-to-tail association, of the N-terminal and C-terminal halves results in a closed conformation (inactive form) which is incapable of actin or membrane-binding. In terms of biological role, probably involved in connections of major cytoskeletal structures to the plasma membrane. In epithelial cells, required for the formation of microvilli and membrane ruffles on the apical pole. Along with PLEKHG6, required for normal macropinocytosis. This Rattus norvegicus (Rat) protein is Ezrin (Ezr).